Here is a 108-residue protein sequence, read N- to C-terminus: uncharacterized protein (108 aa).

In terms of domain architecture, HTH cro/C1-type spans 20–74; it reads VRQRRTALILDQETLARRIGVSFQQIQKYERGRNRISASRLYDIAKALAVPIDYF. A DNA-binding region (H-T-H motif) is located at residues 31–50; the sequence is QETLARRIGVSFQQIQKYER.

This is an uncharacterized protein from Rhodospirillum rubrum.